We begin with the raw amino-acid sequence, 60 residues long: Waprin-Lio1 (60 aa).

Positions 1 to 8 (MLLGTTSA) are cleaved as a signal peptide. One can recognise a WAP domain in the interval 9–59 (QVVRPGSCPNVDVPIPPLGLCRTTCQTDANCQEGRKCCKNGCGFMTCETAR). Cystine bridges form between C16/C46, C29/C50, C33/C45, and C39/C55.

It belongs to the venom waprin family. As to expression, expressed by the venom gland.

The protein resides in the secreted. In terms of biological role, damages membranes of susceptible bacteria. Has no hemolytic activity. Not toxic to mice. Does not inhibit the proteinases elastase and cathepsin G. In Erythrolamprus poecilogyrus (Water snake), this protein is Waprin-Lio1.